The following is a 150-amino-acid chain: Kirola (150 aa).

Methionine 1 is subject to N-acetylmethionine.

It belongs to the MLP family. In terms of assembly, monomer. The N-terminus is blocked.

In Actinidia deliciosa (Kiwi), this protein is Kirola.